Reading from the N-terminus, the 256-residue chain is Large ribosomal subunit protein bL21c (256 aa).

The transit peptide at 1–55 (MASATLAFSCSSLCATLKLPQNLNPLLLNVPPLSKPFSGVVSPPSLSRLSLLPVA) directs the protein to the chloroplast.

In terms of assembly, component of the chloroplast large ribosomal subunit (LSU). Mature 70S chloroplast ribosomes of higher plants consist of a small (30S) and a large (50S) subunit. The 30S small subunit contains 1 molecule of ribosomal RNA (16S rRNA) and 24 different proteins. The 50S large subunit contains 3 rRNA molecules (23S, 5S and 4.5S rRNA) and 33 different proteins.

The protein resides in the plastid. It is found in the chloroplast. Component of the chloroplast ribosome (chloro-ribosome), a dedicated translation machinery responsible for the synthesis of chloroplast genome-encoded proteins, including proteins of the transcription and translation machinery and components of the photosynthetic apparatus. This chain is Large ribosomal subunit protein bL21c (RPL21), found in Spinacia oleracea (Spinach).